Consider the following 279-residue polypeptide: Very long chain fatty acid elongase 1 (279 aa).

M1 bears the N-acetylmethionine mark. A run of 7 helical transmembrane segments spans residues 23–43 (PLMG…YFVL), 61–81 (FMIV…YEFL), 110–130 (VAWL…IFIL), 137–154 (VTFL…SWWW), 176–196 (VIMY…PYLW), 201–221 (MTAI…QYYF), and 231–251 (VIIH…SNFW). The short motif at 275–279 (KVKAN) is the Di-lysine motif element.

Belongs to the ELO family. ELOVL1 subfamily. Interacts with LASS2 and HSD17B12. Interacts with TECR. In terms of tissue distribution, ubiquitous.

Its subcellular location is the endoplasmic reticulum membrane. It carries out the reaction a very-long-chain acyl-CoA + malonyl-CoA + H(+) = a very-long-chain 3-oxoacyl-CoA + CO2 + CoA. It catalyses the reaction eicosanoyl-CoA + malonyl-CoA + H(+) = 3-oxodocosanoyl-CoA + CO2 + CoA. The enzyme catalyses (11Z)-eicosenoyl-CoA + malonyl-CoA + H(+) = 3-oxo-(13Z)-docosenoyl-CoA + CO2 + CoA. The catalysed reaction is docosanoyl-CoA + malonyl-CoA + H(+) = 3-oxotetracosanoyl-CoA + CO2 + CoA. It carries out the reaction (13Z)-docosenoyl-CoA + malonyl-CoA + H(+) = 3-oxo-(15Z)-tetracosenoyl-CoA + CO2 + CoA. It catalyses the reaction tetracosanoyl-CoA + malonyl-CoA + H(+) = 3-oxohexacosanoyl-CoA + CO2 + CoA. The enzyme catalyses hexacosanoyl-CoA + malonyl-CoA + H(+) = 3-oxooctacosanyol-CoA + CO2 + CoA. The catalysed reaction is octadecanoyl-CoA + malonyl-CoA + H(+) = 3-oxoeicosanoyl-CoA + CO2 + CoA. The protein operates within lipid metabolism; fatty acid biosynthesis. Its function is as follows. Catalyzes the first and rate-limiting reaction of the four reactions that constitute the long-chain fatty acids elongation cycle. This endoplasmic reticulum-bound enzymatic process allows the addition of 2 carbons to the chain of long- and very long-chain fatty acids (VLCFAs) per cycle. Condensing enzyme that exhibits activity toward saturated and monounsaturated acyl-CoA substrates, with the highest activity towards C22:0 acyl-CoA. May participate in the production of both saturated and monounsaturated VLCFAs of different chain lengths that are involved in multiple biological processes as precursors of membrane lipids and lipid mediators. Important for saturated C24:0 and monounsaturated C24:1 sphingolipid synthesis. Indirectly inhibits RPE65 via production of VLCFAs. This chain is Very long chain fatty acid elongase 1, found in Homo sapiens (Human).